The following is a 222-amino-acid chain: Myosin regulatory light chain 2 (222 aa).

The segment at 1 to 65 is disordered; it reads MADEKKKVKK…RGSRKSKRAG (65 aa). Alanine 2 carries the post-translational modification N-acetylalanine. A compositionally biased stretch (low complexity) spans 19 to 53; that stretch reads TSETASEAASEAATPAPAATPAPAASATGSKRASG. Residues serine 66 and serine 67 each carry the phosphoserine modification. EF-hand domains are found at residues 75–110, 147–180, and 181–216; these read KQIAEFKEAFQLMDADKDGIIGKNDLRAAFDSVGKI, DEDEVVIAAFKTFDNDGLIDGDKFREMLMNFGDK, and FTMKEVDDAYDQMVIDDKNQIDTAALIEMLTGKGEE. Aspartate 88, aspartate 90, aspartate 92, and aspartate 99 together coordinate Ca(2+).

Myosin is a hexamer of 2 heavy chains and 4 light chains.

The chain is Myosin regulatory light chain 2 (Mlc2) from Drosophila melanogaster (Fruit fly).